The following is a 188-amino-acid chain: UPF0301 protein Tcr_1827 (188 aa).

It belongs to the UPF0301 (AlgH) family.

In Hydrogenovibrio crunogenus (strain DSM 25203 / XCL-2) (Thiomicrospira crunogena), this protein is UPF0301 protein Tcr_1827.